A 300-amino-acid chain; its full sequence is ADP-polyphosphate phosphotransferase 1 (300 aa).

This sequence belongs to the polyphosphate kinase 2 (PPK2) family. Class I subfamily. Homotetramer. Mg(2+) is required as a cofactor.

It carries out the reaction [phosphate](n) + ATP = [phosphate](n+1) + ADP. The catalysed reaction is [phosphate](n) + GTP = [phosphate](n+1) + GDP. Functionally, uses inorganic polyphosphate (polyP) as a donor to convert ADP to ATP. Can also convert GDP to GTP, with lower efficiency. Cannot dephosphorylate ATP in the presence of polyP. This chain is ADP-polyphosphate phosphotransferase 1, found in Rhizobium meliloti (strain 1021) (Ensifer meliloti).